A 379-amino-acid chain; its full sequence is Cobalt-precorrin-5B C(1)-methyltransferase (379 aa).

It belongs to the CbiD family.

It carries out the reaction Co-precorrin-5B + S-adenosyl-L-methionine = Co-precorrin-6A + S-adenosyl-L-homocysteine. The protein operates within cofactor biosynthesis; adenosylcobalamin biosynthesis; cob(II)yrinate a,c-diamide from sirohydrochlorin (anaerobic route): step 6/10. Its function is as follows. Catalyzes the methylation of C-1 in cobalt-precorrin-5B to form cobalt-precorrin-6A. In Salmonella paratyphi A (strain ATCC 9150 / SARB42), this protein is Cobalt-precorrin-5B C(1)-methyltransferase.